A 618-amino-acid chain; its full sequence is Serine/threonine-protein kinase pkn1 (618 aa).

In terms of domain architecture, Protein kinase spans 15–381 (YKILCYLRKG…KEEVKPQPLF (367 aa)). Residues 21 to 29 (LRKGLWCQD) and Lys44 each bind ATP.

It belongs to the protein kinase superfamily. Ser/Thr protein kinase family. In terms of processing, autophosphorylated on serine and threonine residues.

The catalysed reaction is L-seryl-[protein] + ATP = O-phospho-L-seryl-[protein] + ADP + H(+). The enzyme catalyses L-threonyl-[protein] + ATP = O-phospho-L-threonyl-[protein] + ADP + H(+). In terms of biological role, together with the serine/threonine kinase PknD, may play a role in the specific interactions with host proteins during intracellular growth. This chain is Serine/threonine-protein kinase pkn1 (pkn1), found in Chlamydia caviae (strain ATCC VR-813 / DSM 19441 / 03DC25 / GPIC) (Chlamydophila caviae).